The following is a 547-amino-acid chain: NXPE family member 1 (547 aa).

The first 21 residues, 1 to 21, serve as a signal peptide directing secretion; that stretch reads MSSNTMLQKTLLILISFSVVT. Residues asparagine 39 and asparagine 211 are each glycosylated (N-linked (GlcNAc...) asparagine).

This sequence belongs to the NXPE family.

The protein localises to the secreted. This is NXPE family member 1 (NXPE1) from Homo sapiens (Human).